The chain runs to 269 residues: MERSQSRLSLSASFEALAIYFPCMNSFDDEDAADSRRLKGAIQRSTETGLAVEMPSRTLRQASHESIEDSMNSYGSEGNLNYGGVCLASDAQFSDFLGSMGPAQFVGRQTLATTPMGGVEIGLQERNGQLEVDIIQARGLTAKPGSKTLPAAYIKAYLLENGVCIAKKKTKVARKSLDPLYNQVLLFPESPQGKVLQVIVWGNYGRMERKQFMGVARVLLEELDLTTLAVGWYKLFPTSSMVDPATGPLLRQASQLSLESTVGPCGERS.

The C2 domain occupies 115–233; that stretch reads PMGGVEIGLQ…DLTTLAVGWY (119 aa). 2 positions are modified to phosphoserine: serine 254 and serine 257.

In terms of assembly, binds PPFIA3. In terms of tissue distribution, brain specific.

It is found in the synapse. Functionally, regulates synaptic membrane exocytosis. The sequence is that of Regulating synaptic membrane exocytosis protein 4 (Rims4) from Rattus norvegicus (Rat).